Here is an 852-residue protein sequence, read N- to C-terminus: Lon protease homolog 2, peroxisomal (852 aa).

The residue at position 2 (Ser2) is an N-acetylserine. Residues 13–222 enclose the Lon N-terminal domain; the sequence is LPLLLTHEGV…MTIPLLVRQI (210 aa). 375–382 is an ATP binding site; it reads GPPGVGKT. The Lon proteolytic domain occupies 651 to 837; the sequence is LSQPGVAIGL…DEVLNAAFDG (187 aa). Catalysis depends on residues Ser743 and Lys786. The short motif at 850–852 is the Microbody targeting signal element; that stretch reads SKL.

Belongs to the peptidase S16 family. In terms of assembly, interacts with PEX5. Interacts with TYSND1. May interact with enzymes involved in beta-oxidation of fatty acids, including ACOX1/AOX.

It is found in the peroxisome matrix. It carries out the reaction Hydrolysis of proteins in presence of ATP.. Functionally, ATP-dependent serine protease that mediates the selective degradation of misfolded and unassembled polypeptides in the peroxisomal matrix. Necessary for type 2 peroxisome targeting signal (PTS2)-containing protein processing and facilitates peroxisome matrix protein import. May indirectly regulate peroxisomal fatty acid beta-oxidation through degradation of the self-processed forms of TYSND1. The chain is Lon protease homolog 2, peroxisomal from Bos taurus (Bovine).